A 111-amino-acid polypeptide reads, in one-letter code: Cryptic phage CTXphi transcriptional repressor RstR (111 aa).

The 55-residue stretch at 6-60 (IRDLRVERDLNQEEVANGIGVGKNTYLAYEKGTQSPKLETVEKLAKFYGVPIAEL) folds into the HTH cro/C1-type domain. Positions 17 to 36 (QEEVANGIGVGKNTYLAYEK) form a DNA-binding region, H-T-H motif.

Its function is as follows. Transcriptional repressor of the integrated CTXPhi phage gene rstA2. The sequence is that of Cryptic phage CTXphi transcriptional repressor RstR (rstR) from Vibrio cholerae.